A 287-amino-acid chain; its full sequence is Cysteine-rich repeat secretory protein 59 (287 aa).

Positions 1–26 are cleaved as a signal peptide; the sequence is METTKKLSPIFCFSSLLCLFFTMNQA. Gnk2-homologous domains lie at 32–134 and 140–250; these read HMDT…DKFF and KKPN…ITTS. Residues N43, N47, N63, N72, N93, N103, N111, and N212 are each glycosylated (N-linked (GlcNAc...) asparagine).

This sequence belongs to the cysteine-rich repeat secretory protein family.

It localises to the secreted. The polypeptide is Cysteine-rich repeat secretory protein 59 (CRRSP59) (Arabidopsis thaliana (Mouse-ear cress)).